A 456-amino-acid polypeptide reads, in one-letter code: 3-isopropylmalate dehydratase large subunit (456 aa).

The [4Fe-4S] cluster site is built by cysteine 336, cysteine 396, and cysteine 399.

The protein belongs to the aconitase/IPM isomerase family. LeuC type 1 subfamily. Heterodimer of LeuC and LeuD. Requires [4Fe-4S] cluster as cofactor.

It carries out the reaction (2R,3S)-3-isopropylmalate = (2S)-2-isopropylmalate. It participates in amino-acid biosynthesis; L-leucine biosynthesis; L-leucine from 3-methyl-2-oxobutanoate: step 2/4. Catalyzes the isomerization between 2-isopropylmalate and 3-isopropylmalate, via the formation of 2-isopropylmaleate. This chain is 3-isopropylmalate dehydratase large subunit, found in Staphylococcus haemolyticus (strain JCSC1435).